We begin with the raw amino-acid sequence, 323 residues long: Protein translocase subunit SecF (323 aa).

The next 6 membrane-spanning stretches (helical) occupy residues 19–39, 138–158, 162–182, 189–209, 244–264, and 269–289; these read GVIVSAILVLLALGLLFFKGF, ILSLILALIAIMVYVSFRYEW, LASVVALVHDVILVASSVIVF, EVIAALLTLIGYSINDTIIIF, LTVFFVVLILCVFGSKIIIGF, and LIGTIVGTYSSIFIAPKVALL.

It belongs to the SecD/SecF family. SecF subfamily. In terms of assembly, forms a complex with SecD. Part of the essential Sec protein translocation apparatus which comprises SecA, SecYEG and auxiliary proteins SecDF-YajC and YidC.

The protein resides in the cell inner membrane. Its function is as follows. Part of the Sec protein translocase complex. Interacts with the SecYEG preprotein conducting channel. SecDF uses the proton motive force (PMF) to complete protein translocation after the ATP-dependent function of SecA. In Helicobacter pylori (strain J99 / ATCC 700824) (Campylobacter pylori J99), this protein is Protein translocase subunit SecF.